Reading from the N-terminus, the 210-residue chain is Chorismate pyruvate-lyase (210 aa).

Belongs to the chorismate pyruvate-lyase type 2 family.

The enzyme catalyses chorismate = 4-hydroxybenzoate + pyruvate. Removes the pyruvyl group from chorismate to provide 4-hydroxybenzoate (4HB). Involved in the synthesis of glycosylated p-hydroxybenzoic acid methyl esters (p-HBADs) and phenolic glycolipids (PGL) that play important roles in the pathogenesis of mycobacterial infections. The polypeptide is Chorismate pyruvate-lyase (Mycobacterium leprae (strain TN)).